A 28-amino-acid polypeptide reads, in one-letter code: uncharacterized protein (28 aa).

This is an uncharacterized protein from Escherichia coli (Bacteriophage T4).